The following is a 702-amino-acid chain: Serotransferrin-A (702 aa).

Positions 1–19 (MDLSLRVALCLSMLALCLA) are cleaved as a signal peptide. Transferrin-like domains lie at 26-340 (VRWC…ALKE) and 353-685 (VRWC…SLNK). Cystine bridges form between Cys-29–Cys-64 and Cys-39–Cys-55. Positions 79 and 111 each coordinate Fe(3+). Disulfide bonds link Cys-134–Cys-217, Cys-179–Cys-192, and Cys-245–Cys-259. Hydrogencarbonate-binding residues include Thr-136, Lys-140, Ala-142, and Gly-143. Tyr-211 is a binding site for Fe(3+). A Fe(3+)-binding site is contributed by His-267. The segment at 340-349 (EGVKEDDSAA) is connecting region. 2 disulfide bridges follow: Cys-356–Cys-388 and Cys-366–Cys-379. Asp-403 and Tyr-442 together coordinate Fe(3+). 7 disulfides stabilise this stretch: Cys-413-Cys-697, Cys-431-Cys-658, Cys-465-Cys-544, Cys-489-Cys-686, Cys-499-Cys-513, Cys-510-Cys-527, and Cys-584-Cys-598. Hydrogencarbonate-binding residues include Thr-467, Arg-471, Ala-473, and Gly-474. Tyr-538 contributes to the Fe(3+) binding site. Fe(3+) is bound at residue His-606.

This sequence belongs to the transferrin family. Monomer. Plasma.

It is found in the secreted. Functionally, transferrins are iron binding transport proteins which can bind two Fe(3+) ions in association with the binding of an anion, usually bicarbonate. It is responsible for the transport of iron from sites of absorption and heme degradation to those of storage and utilization. Serum transferrin may also have a further role in stimulating cell proliferation. The chain is Serotransferrin-A (tf-a) from Xenopus laevis (African clawed frog).